The sequence spans 359 residues: tRNA-specific 2-thiouridylase MnmA (359 aa).

ATP is bound by residues 6–13 and Leu32; that span reads AMSGGVDS. The Nucleophile role is filled by Cys97. Cys97 and Cys195 form a disulfide bridge. Gly121 is an ATP binding site. The interval 144-146 is interaction with tRNA; that stretch reads KDQ. Cys195 serves as the catalytic Cysteine persulfide intermediate.

It belongs to the MnmA/TRMU family.

The protein localises to the cytoplasm. The catalysed reaction is S-sulfanyl-L-cysteinyl-[protein] + uridine(34) in tRNA + AH2 + ATP = 2-thiouridine(34) in tRNA + L-cysteinyl-[protein] + A + AMP + diphosphate + H(+). In terms of biological role, catalyzes the 2-thiolation of uridine at the wobble position (U34) of tRNA, leading to the formation of s(2)U34. This is tRNA-specific 2-thiouridylase MnmA from Tropheryma whipplei (strain TW08/27) (Whipple's bacillus).